We begin with the raw amino-acid sequence, 121 residues long: Small ribosomal subunit protein uS13 (121 aa).

The segment at 88-121 (GMRHRRGLPTRGQNTKNNARTRKGPAKSIAGKKK) is disordered. Basic residues predominate over residues 106-121 (ARTRKGPAKSIAGKKK).

Belongs to the universal ribosomal protein uS13 family. As to quaternary structure, part of the 30S ribosomal subunit. Forms a loose heterodimer with protein S19. Forms two bridges to the 50S subunit in the 70S ribosome.

Its function is as follows. Located at the top of the head of the 30S subunit, it contacts several helices of the 16S rRNA. In the 70S ribosome it contacts the 23S rRNA (bridge B1a) and protein L5 of the 50S subunit (bridge B1b), connecting the 2 subunits; these bridges are implicated in subunit movement. Contacts the tRNAs in the A and P-sites. This Lactococcus lactis subsp. cremoris (strain MG1363) protein is Small ribosomal subunit protein uS13.